Here is a 364-residue protein sequence, read N- to C-terminus: S-adenosylmethionine:tRNA ribosyltransferase-isomerase (364 aa).

It belongs to the QueA family. As to quaternary structure, monomer.

The protein localises to the cytoplasm. It carries out the reaction 7-aminomethyl-7-carbaguanosine(34) in tRNA + S-adenosyl-L-methionine = epoxyqueuosine(34) in tRNA + adenine + L-methionine + 2 H(+). It functions in the pathway tRNA modification; tRNA-queuosine biosynthesis. Transfers and isomerizes the ribose moiety from AdoMet to the 7-aminomethyl group of 7-deazaguanine (preQ1-tRNA) to give epoxyqueuosine (oQ-tRNA). The sequence is that of S-adenosylmethionine:tRNA ribosyltransferase-isomerase from Bradyrhizobium sp. (strain BTAi1 / ATCC BAA-1182).